The primary structure comprises 843 residues: Pentatricopeptide repeat-containing protein At4g21880, mitochondrial (843 aa).

PPR repeat units lie at residues 392-426, 427-461, 462-496, 497-531, 532-562, 564-594, and 598-632; these read SSTSYENLVSYLCGSNEVVTALDIVENMCEAGLVI, SANILHSLLQAIEQILEFNLVQRIYSIMSNKSVKP, NSETFRKSINLCIRIKDFEGAYNMLGNLKNFNLAP, NSSMYNSIMAGYFREKKVNSALKVLKEMKEADVKP, DSVTFSYLINYCGEEATIAKYYKEMKQAGVE, NKHVYMSLVKAYASCGQFEKAKQVLMDLEVP, and HNELKSVLISALASNGNITEALSIYEEMKKLRCPV.

The protein belongs to the PPR family. P subfamily.

It is found in the mitochondrion. The sequence is that of Pentatricopeptide repeat-containing protein At4g21880, mitochondrial from Arabidopsis thaliana (Mouse-ear cress).